The sequence spans 1254 residues: Structural polyprotein (1254 aa).

Positions 1-33 (MFPFQPMYPMQPMPYRNPFAAPRRPWFPRTDPF) are necessary for nucleocapsid assembly and virus assembly. The segment at 33 to 68 (FLAMQVQELTRSMANLTFKQRRDAPPEGPSAKKPKK) is host transcription inhibition. Positions 41–48 (LTRSMANL) match the Supraphysiological nuclear export signal motif. The disordered stretch occupies residues 45–119 (MANLTFKQRR…KKPGKRQRMV (75 aa)). Positions 64 to 68 (KKPKK) match the Nuclear localization signal motif. Residues 80 to 92 (GKKKKNQGKKKAK) are compositionally biased toward basic residues. Positions 91 to 127 (AKTGPPNPKAQNGNKKKTNKKPGKRQRMVMKLESDKT) are binding to the viral RNA. Phosphothreonine is present on residues Thr93 and Thr108. Residues 104-118 (NKKKTNKKPGKRQRM) show a composition bias toward basic residues. Positions 112 to 126 (PGKRQRMVMKLESDK) are ribosome-binding. Ser124 carries the post-translational modification Phosphoserine. The 150-residue stretch at 126–275 (KTFPIMLEGK…KYTPENCEQW (150 aa)) folds into the Peptidase S3 domain. Phosphothreonine is present on Thr127. Residues His152, Asp174, and Ser226 each act as charge relay system in the active site. Residues 276–287 (SLVTTMCLLANV) form a functions as an uncleaved signal peptide for the precursor of protein E3/E2 region. The Extracellular portion of the chain corresponds to 276-701 (SLVTTMCLLA…HYYHRYPMST (426 aa)). N-linked (GlcNAc...) asparagine; by host glycans are attached at residues Asn286, Asn546, and Asn652. The chain crosses the membrane as a helical span at residues 702 to 722 (ILGLSICAAIATVSVAASTWL). Topologically, residues 723-757 (FCRSRVACLTPYRLTPNARIPFCLAVLCCARTARA) are cytoplasmic. Residues Cys730, Cys750, and Cys751 are each lipidated (S-palmitoyl cysteine; by host). The Extracellular segment spans residues 758 to 772 (ETTWESLDHLWNNNQ). The chain crosses the membrane as a helical span at residues 773–793 (QMFWIQLLIPLAALIVVTRLL). Over 794–795 (RC) the chain is Cytoplasmic. A helical transmembrane segment spans residues 796-816 (VCCVVPFLVMAGAAAPAYEHA). The Extracellular portion of the chain corresponds to 817–1224 (TTMPSQAGIS…SKTAWTWLTS (408 aa)). 4 cysteine pairs are disulfide-bonded: Cys861–Cys926, Cys874–Cys906, Cys875–Cys908, and Cys880–Cys890. Residues 896–913 (VYPFMWGGAYCFCDTENT) form an E1 fusion peptide loop region. N-linked (GlcNAc...) asparagine; by host glycosylation is present at Asn946. 4 cysteine pairs are disulfide-bonded: Cys1071–Cys1083, Cys1113–Cys1188, Cys1118–Cys1192, and Cys1140–Cys1182. Residues 1225-1245 (LLGGSAVIIIIGLVLATIVAM) form a helical membrane-spanning segment. At 1246–1254 (YVLTNQKHN) the chain is on the cytoplasmic side.

In terms of assembly, homodimer. Homomultimer. Interacts with host karyopherin KPNA4; this interaction allows the nuclear import of the viral capsid protein. Interacts with spike glycoprotein E2. Interacts with host IRAK1; the interaction leads to inhibition of IRAK1-dependent signaling. Part of a tetrameric complex composed of host CRM1, host importin alpha/beta dimer and the viral capsid; this complex blocks the receptor-mediated transport through the nuclear pore. Interacts with host phosphatase PPP1CA; this interaction dephosphorylates the capsid protein, which increases its ability to bind to the viral genome. As to quaternary structure, the precursor of protein E3/E2 and E1 form a heterodimer shortly after synthesis. Interacts with spike glycoprotein E2. The precursor of protein E3/E2 and E1 form a heterodimer shortly after synthesis. Processing of the precursor of protein E3/E2 into E2 and E3 results in a heterodimer of the spike glycoproteins E2 and E1. Spike at virion surface are constituted of three E2-E1 heterodimers. After target cell attachment and endocytosis, E1 change conformation to form homotrimers. Interacts with 6K protein. Interacts (via fusion peptide loop) with host LDLRAD3 (via domain LDL-receptor class A 1); this interaction mediates viral entry to the host cell. 2 adjacent E2-E1 heterodimers in the trimeric spike interact with host LDLRAD3. In terms of assembly, interacts with spike glycoprotein E1. Processing of the precursor of protein E3/E2 into E2 and E3 results in a heterodimer of the spike glycoproteins E2 and E1. Spike at virion surface are constituted of a trimer of E2-E1 heterodimers. Interacts with 6K protein. Interacts with host LDLRAD3 (via domain LDL-receptor class A 1); this interaction mediates viral entry to the host cell. 2 adjacent E2-E1 heterodimers in the trimeric spike interact with host LDLRAD3. As to quaternary structure, oligomer. Interacts with spike glycoprotein E1. Interacts with spike glycoprotein E2. In terms of processing, structural polyprotein: Specific enzymatic cleavages in vivo yield mature proteins. Capsid protein is auto-cleaved during polyprotein translation, unmasking a signal peptide at the N-terminus of the precursor of E3/E2. The remaining polyprotein is then targeted to the host endoplasmic reticulum, where host signal peptidase cleaves it into pE2, 6K and E1 proteins. pE2 is further processed to mature E3 and E2 by host furin in trans-Golgi vesicle. Phosphorylated on serine and threonine residues. Post-translationally, palmitoylated via thioester bonds. These palmitoylations may induce disruption of the C-terminus transmembrane. This would result in the reorientation of E2 C-terminus from lumenal to cytoplasmic side. In terms of processing, N-glycosylated. Palmitoylated via thioester bonds.

It is found in the virion. The protein resides in the host cytoplasm. It localises to the host cell membrane. The protein localises to the host nucleus. Its subcellular location is the virion membrane. The enzyme catalyses Autocatalytic release of the core protein from the N-terminus of the togavirus structural polyprotein by hydrolysis of a -Trp-|-Ser- bond.. In terms of biological role, forms an icosahedral capsid with a T=4 symmetry composed of 240 copies of the capsid protein surrounded by a lipid membrane through which penetrate 80 spikes composed of trimers of E1-E2 heterodimers. The capsid protein binds to the viral RNA genome at a site adjacent to a ribosome binding site for viral genome translation following genome release. Possesses a protease activity that results in its autocatalytic cleavage from the nascent structural protein. Following its self-cleavage, the capsid protein transiently associates with ribosomes, and within several minutes the protein binds to viral RNA and rapidly assembles into icosahedric core particles. The resulting nucleocapsid eventually associates with the cytoplasmic domain of the spike glycoprotein E2 at the cell membrane, leading to budding and formation of mature virions. In case of infection, new virions attach to target cells and after clathrin-mediated endocytosis their membrane fuses with the host endosomal membrane. This leads to the release of the nucleocapsid into the cytoplasm, followed by an uncoating event necessary for the genomic RNA to become accessible. The uncoating might be triggered by the interaction of capsid proteins with ribosomes. Binding of ribosomes would release the genomic RNA since the same region is genomic RNA-binding and ribosome-binding. Specifically inhibits interleukin-1 receptor-associated kinase 1/IRAK1-dependent signaling during viral entry, representing a means by which the alphaviruses may evade innate immune detection and activation prior to viral gene expression. Inhibits host transcription. Forms a tetrameric complex with XPO1/CRM1 and the nuclear import receptor importin. This complex blocks the central channel of host nuclear pores thereby inhibiting the receptor-mediated nuclear transport and thus the host mRNA and rRNA transcription. The inhibition of transcription is linked to a cytopathic effect on the host cell. Its function is as follows. Provides the signal sequence for the translocation of the precursor of protein E3/E2 to the host endoplasmic reticulum. Furin-cleaved E3 remains associated with spike glycoprotein E1 and mediates pH protection of the latter during the transport via the secretory pathway. After virion release from the host cell, the assembly protein E3 is gradually released in the extracellular space. Plays a role in viral attachment to target host cell, by binding to the cell receptor LDLRAD3. Synthesized as a p62 precursor which is processed by furin at the cell membrane just before virion budding, giving rise to E2-E1 heterodimer. The p62-E1 heterodimer is stable, whereas E2-E1 is unstable and dissociate at low pH. p62 is processed at the last step, presumably to avoid E1 fusion activation before its final export to cell surface. E2 C-terminus contains a transitory transmembrane that would be disrupted by palmitoylation, resulting in reorientation of the C-terminal tail from lumenal to cytoplasmic side. This step is critical since E2 C-terminus is involved in budding by interacting with capsid proteins. This release of E2 C-terminus in cytoplasm occurs lately in protein export, and precludes premature assembly of particles at the endoplasmic reticulum membrane. Functionally, acts as a viroporin that participates in virus glycoprotein processing and transport to the plasma membrane, cell permeabilization and budding of viral particles. Disrupts the calcium homeostasis of the cell, probably at the endoplasmic reticulum level. This leads to cytoplasmic calcium elevation. Because of its lipophilic properties, the 6K protein is postulated to influence the selection of lipids that interact with the transmembrane domains of the glycoproteins, which, in turn, affects the deformability of the bilayer required for the extreme curvature that occurs as budding proceeds. Present in low amount in virions, about 3% compared to viral glycoproteins. In terms of biological role, class II viral fusion protein. Fusion activity is inactive as long as E1 is bound to E2 in mature virion. After virus attachment to cell receptor LDLRAD3 and endocytosis, acidification of the endosome induce dissociation of E1/E2 heterodimer and concomitant trimerization of the E1 subunits. This E1 trimer is fusion active, and promotes release of viral nucleocapsid in cytoplasm after endosome and viral membrane fusion. Efficient fusion requires the presence of cholesterol and sphingolipid in the target membrane. The polypeptide is Structural polyprotein (Bos taurus (Bovine)).